The following is a 520-amino-acid chain: Bifunctional purine biosynthesis protein PurH (520 aa).

Residues M1 to V150 enclose the MGS-like domain.

Belongs to the PurH family.

The enzyme catalyses (6R)-10-formyltetrahydrofolate + 5-amino-1-(5-phospho-beta-D-ribosyl)imidazole-4-carboxamide = 5-formamido-1-(5-phospho-D-ribosyl)imidazole-4-carboxamide + (6S)-5,6,7,8-tetrahydrofolate. It catalyses the reaction IMP + H2O = 5-formamido-1-(5-phospho-D-ribosyl)imidazole-4-carboxamide. It functions in the pathway purine metabolism; IMP biosynthesis via de novo pathway; 5-formamido-1-(5-phospho-D-ribosyl)imidazole-4-carboxamide from 5-amino-1-(5-phospho-D-ribosyl)imidazole-4-carboxamide (10-formyl THF route): step 1/1. It participates in purine metabolism; IMP biosynthesis via de novo pathway; IMP from 5-formamido-1-(5-phospho-D-ribosyl)imidazole-4-carboxamide: step 1/1. The polypeptide is Bifunctional purine biosynthesis protein PurH (Corynebacterium glutamicum (strain ATCC 13032 / DSM 20300 / JCM 1318 / BCRC 11384 / CCUG 27702 / LMG 3730 / NBRC 12168 / NCIMB 10025 / NRRL B-2784 / 534)).